A 387-amino-acid polypeptide reads, in one-letter code: MNRNDYDVVIIGGGPVGCITGEYIKNGRVLIVEEHQSIGVPLQCAGLISKNGVKELGNPKGVVNKVRGAYIYSKNSMVKIGNEGIRAYIFERKVMDKDIAIRAAKKCDFLLKAYGKIEKDKNGYKVEITHLGEKITLNPKIIVGADGAKTITGKKLGLVNNKNREILSSCQFEMVNAEVDDDFVYIFLDRKYSERFFTWIIPMGKDRVRVGLIDRGNCYNKLIRFINENKIAKEILKNATITEFSTGSLPIGYLDKTFKDNVLLVGDAACHVKPLSGGGLYFGAMGGKIAGEVISKYLNEDIENLELYDKRWKETFGSEIKNGLRVRKLFLKLGNDTLDKIIEKLSKSDLIDYINKHGDMDRQASLSIKVLKSLDIGLGFRILRDLL.

The protein belongs to the geranylgeranyl reductase family. ChlP subfamily.

This is an uncharacterized protein from Methanocaldococcus jannaschii (strain ATCC 43067 / DSM 2661 / JAL-1 / JCM 10045 / NBRC 100440) (Methanococcus jannaschii).